The primary structure comprises 579 residues: Tyrosine 3-monooxygenase (579 aa).

The span at 105–114 (VEFESVEQEQ) shows a compositional bias: acidic residues. Positions 105–132 (VEFESVEQEQSESQSQEPEGNQQPTKND) are disordered. Fe cation-binding residues include His409, His414, and Glu454.

The protein belongs to the biopterin-dependent aromatic amino acid hydroxylase family. Fe(2+) serves as cofactor.

It localises to the cytoplasm. The protein localises to the perinuclear region. The protein resides in the cell projection. It is found in the axon. It catalyses the reaction (6R)-L-erythro-5,6,7,8-tetrahydrobiopterin + L-tyrosine + O2 = (4aS,6R)-4a-hydroxy-L-erythro-5,6,7,8-tetrahydrobiopterin + L-dopa. Its pathway is catecholamine biosynthesis; dopamine biosynthesis; dopamine from L-tyrosine: step 1/2. Phosphorylation leads to an increase in the catalytic activity. Plays an important role in the physiology of adrenergic neurons. The chain is Tyrosine 3-monooxygenase (ple) from Drosophila melanogaster (Fruit fly).